Here is a 126-residue protein sequence, read N- to C-terminus: Small ribosomal subunit protein uS11 (126 aa).

It belongs to the universal ribosomal protein uS11 family. In terms of assembly, part of the 30S ribosomal subunit. Interacts with proteins S7 and S18. Binds to IF-3.

Functionally, located on the platform of the 30S subunit, it bridges several disparate RNA helices of the 16S rRNA. Forms part of the Shine-Dalgarno cleft in the 70S ribosome. The protein is Small ribosomal subunit protein uS11 of Ehrlichia chaffeensis (strain ATCC CRL-10679 / Arkansas).